The following is an 896-amino-acid chain: Alanine--tRNA ligase (896 aa).

Zn(2+) contacts are provided by histidine 574, histidine 578, cysteine 677, and histidine 681.

This sequence belongs to the class-II aminoacyl-tRNA synthetase family. Zn(2+) is required as a cofactor.

The protein resides in the cytoplasm. The catalysed reaction is tRNA(Ala) + L-alanine + ATP = L-alanyl-tRNA(Ala) + AMP + diphosphate. Its function is as follows. Catalyzes the attachment of alanine to tRNA(Ala) in a two-step reaction: alanine is first activated by ATP to form Ala-AMP and then transferred to the acceptor end of tRNA(Ala). Also edits incorrectly charged Ser-tRNA(Ala) and Gly-tRNA(Ala) via its editing domain. This Mycoplasma capricolum subsp. capricolum (strain California kid / ATCC 27343 / NCTC 10154) protein is Alanine--tRNA ligase.